The chain runs to 497 residues: Glutamyl-tRNA reductase (497 aa).

Substrate is bound by residues 58–61 (TCNR), serine 118, 123–125 (EQQ), and glutamine 129. Cysteine 59 (nucleophile) is an active-site residue. Position 214 to 219 (214 to 219 (GAGAMA)) interacts with NADP(+). Positions 461–477 (VTQPGQADSSAAQTAGT) are enriched in polar residues. A disordered region spans residues 461 to 486 (VTQPGQADSSAAQTAGTSARADQIPS).

The protein belongs to the glutamyl-tRNA reductase family. In terms of assembly, homodimer.

It carries out the reaction (S)-4-amino-5-oxopentanoate + tRNA(Glu) + NADP(+) = L-glutamyl-tRNA(Glu) + NADPH + H(+). The protein operates within porphyrin-containing compound metabolism; protoporphyrin-IX biosynthesis; 5-aminolevulinate from L-glutamyl-tRNA(Glu): step 1/2. Its function is as follows. Catalyzes the NADPH-dependent reduction of glutamyl-tRNA(Glu) to glutamate 1-semialdehyde (GSA). The polypeptide is Glutamyl-tRNA reductase (Corynebacterium jeikeium (strain K411)).